Reading from the N-terminus, the 493-residue chain is BICD family-like cargo adapter 2 (493 aa).

2 coiled-coil regions span residues 56–275 (ELGK…ELHM) and 365–431 (MQHV…LLST).

The protein belongs to the BICDR family.

The protein is BICD family-like cargo adapter 2 (bicdl2) of Xenopus laevis (African clawed frog).